A 254-amino-acid polypeptide reads, in one-letter code: UPF0246 protein FTW_0267 (254 aa).

It belongs to the UPF0246 family.

This chain is UPF0246 protein FTW_0267, found in Francisella tularensis subsp. tularensis (strain WY96-3418).